The following is a 61-amino-acid chain: Small ribosomal subunit protein uS14 (61 aa).

Cys-24, Cys-27, Cys-40, and Cys-43 together coordinate Zn(2+).

This sequence belongs to the universal ribosomal protein uS14 family. Zinc-binding uS14 subfamily. As to quaternary structure, part of the 30S ribosomal subunit. Contacts proteins S3 and S10. Zn(2+) serves as cofactor.

Binds 16S rRNA, required for the assembly of 30S particles and may also be responsible for determining the conformation of the 16S rRNA at the A site. The polypeptide is Small ribosomal subunit protein uS14 (Nautilia profundicola (strain ATCC BAA-1463 / DSM 18972 / AmH)).